Here is a 62-residue protein sequence, read N- to C-terminus: Photosystem II reaction center protein Z (62 aa).

The next 2 helical transmembrane spans lie at 8–28 (FLIA…VAYA) and 41–61 (YVGS…NFLV).

This sequence belongs to the PsbZ family. As to quaternary structure, PSII is composed of 1 copy each of membrane proteins PsbA, PsbB, PsbC, PsbD, PsbE, PsbF, PsbH, PsbI, PsbJ, PsbK, PsbL, PsbM, PsbT, PsbX, PsbY, PsbZ, Psb30/Ycf12, peripheral proteins PsbO, CyanoQ (PsbQ), PsbU, PsbV and a large number of cofactors. It forms dimeric complexes.

The protein localises to the cellular thylakoid membrane. May control the interaction of photosystem II (PSII) cores with the light-harvesting antenna, regulates electron flow through the 2 photosystem reaction centers. PSII is a light-driven water plastoquinone oxidoreductase, using light energy to abstract electrons from H(2)O, generating a proton gradient subsequently used for ATP formation. This is Photosystem II reaction center protein Z from Microcystis aeruginosa (strain NIES-843 / IAM M-2473).